The sequence spans 62 residues: UPF0434 protein Arad_4458 (62 aa).

This sequence belongs to the UPF0434 family.

The polypeptide is UPF0434 protein Arad_4458 (Rhizobium rhizogenes (strain K84 / ATCC BAA-868) (Agrobacterium radiobacter)).